Here is a 337-residue protein sequence, read N- to C-terminus: Centromere protein N (337 aa).

A phosphoserine mark is found at S226 and S233.

It belongs to the CENP-N/CHL4 family. Component of the CENPA-NAC complex, at least composed of CENPA, CENPC, CENPH, CENPM, CENPN, CENPT and CENPU. The CENPA-NAC complex interacts with the CENPA-CAD complex, composed of CENPI, CENPK, CENPL, CENPO, CENPP, CENPQ, CENPR and CENPS. Interacts directly with CENPA. Identified in a centromere complex containing histones H2A, H2B and H4, and at least CENPA, CENPB, CENPC, CENPT, CENPN, HJURP, SUPT16H, SSRP1 and RSF1.

It is found in the nucleus. Its subcellular location is the chromosome. The protein resides in the centromere. It localises to the kinetochore. In terms of biological role, component of the CENPA-NAC (nucleosome-associated) complex, a complex that plays a central role in assembly of kinetochore proteins, mitotic progression and chromosome segregation. The CENPA-NAC complex recruits the CENPA-CAD (nucleosome distal) complex and may be involved in incorporation of newly synthesized CENPA into centromeres. CENPN is the first protein to bind specifically to CENPA nucleosomes and the direct binding of CENPA nucleosomes by CENPN is required for centromere assembly. Required for chromosome congression and efficiently align the chromosomes on a metaphase plate. This Mus musculus (Mouse) protein is Centromere protein N (Cenpn).